The sequence spans 156 residues: dCTP deaminase (156 aa).

Residues 79-84, aspartate 95, glutamine 124, and tyrosine 138 contribute to the dCTP site; that span reads RSSLAR.

Belongs to the dCTP deaminase family. As to quaternary structure, homotrimer.

The enzyme catalyses dCTP + H2O + H(+) = dUTP + NH4(+). It participates in pyrimidine metabolism; dUMP biosynthesis; dUMP from dCTP (dUTP route): step 1/2. Its function is as follows. Catalyzes the deamination of dCTP to dUTP. The sequence is that of dCTP deaminase from Pyrococcus furiosus (strain ATCC 43587 / DSM 3638 / JCM 8422 / Vc1).